Reading from the N-terminus, the 159-residue chain is MIILGIDPSLVSTGWGVISISDSMVNYIDSGVIKTVSKDSLVLKLGNISLMIEKLITRFNPFHVAMEEVFINKNYSSSVTLIQARGAIMSVIGRYNIDFSEYAPNKIKKAIVGAGKAEKHQVQQMVKLLMHIKKAISKDESDALATAYTASVNQQIKII.

Catalysis depends on residues D7, E67, and D139. The Mg(2+) site is built by D7, E67, and D139.

It belongs to the RuvC family. Homodimer which binds Holliday junction (HJ) DNA. The HJ becomes 2-fold symmetrical on binding to RuvC with unstacked arms; it has a different conformation from HJ DNA in complex with RuvA. In the full resolvosome a probable DNA-RuvA(4)-RuvB(12)-RuvC(2) complex forms which resolves the HJ. Mg(2+) is required as a cofactor.

Its subcellular location is the cytoplasm. The enzyme catalyses Endonucleolytic cleavage at a junction such as a reciprocal single-stranded crossover between two homologous DNA duplexes (Holliday junction).. Functionally, the RuvA-RuvB-RuvC complex processes Holliday junction (HJ) DNA during genetic recombination and DNA repair. Endonuclease that resolves HJ intermediates. Cleaves cruciform DNA by making single-stranded nicks across the HJ at symmetrical positions within the homologous arms, yielding a 5'-phosphate and a 3'-hydroxyl group; requires a central core of homology in the junction. The consensus cleavage sequence is 5'-(A/T)TT(C/G)-3'. Cleavage occurs on the 3'-side of the TT dinucleotide at the point of strand exchange. HJ branch migration catalyzed by RuvA-RuvB allows RuvC to scan DNA until it finds its consensus sequence, where it cleaves and resolves the cruciform DNA. The protein is Crossover junction endodeoxyribonuclease RuvC of Orientia tsutsugamushi (strain Boryong) (Rickettsia tsutsugamushi).